We begin with the raw amino-acid sequence, 544 residues long: Chaperonin GroEL (544 aa).

Residues 30–33 (TLGP), lysine 51, 87–91 (DGTTT), glycine 415, 481–483 (DAL), and aspartate 497 each bind ATP.

This sequence belongs to the chaperonin (HSP60) family. As to quaternary structure, forms a cylinder of 14 subunits composed of two heptameric rings stacked back-to-back. Interacts with the co-chaperonin GroES.

The protein resides in the cytoplasm. It catalyses the reaction ATP + H2O + a folded polypeptide = ADP + phosphate + an unfolded polypeptide.. Functionally, together with its co-chaperonin GroES, plays an essential role in assisting protein folding. The GroEL-GroES system forms a nano-cage that allows encapsulation of the non-native substrate proteins and provides a physical environment optimized to promote and accelerate protein folding. The protein is Chaperonin GroEL of Chlamydia muridarum (strain MoPn / Nigg).